A 450-amino-acid chain; its full sequence is Probable glycine dehydrogenase (decarboxylating) subunit 1 (450 aa).

It belongs to the GcvP family. N-terminal subunit subfamily. As to quaternary structure, the glycine cleavage system is composed of four proteins: P, T, L and H. In this organism, the P 'protein' is a heterodimer of two subunits.

It carries out the reaction N(6)-[(R)-lipoyl]-L-lysyl-[glycine-cleavage complex H protein] + glycine + H(+) = N(6)-[(R)-S(8)-aminomethyldihydrolipoyl]-L-lysyl-[glycine-cleavage complex H protein] + CO2. Its function is as follows. The glycine cleavage system catalyzes the degradation of glycine. The P protein binds the alpha-amino group of glycine through its pyridoxal phosphate cofactor; CO(2) is released and the remaining methylamine moiety is then transferred to the lipoamide cofactor of the H protein. The protein is Probable glycine dehydrogenase (decarboxylating) subunit 1 of Staphylococcus haemolyticus (strain JCSC1435).